The following is a 335-amino-acid chain: Fructose-1,6-bisphosphatase class 1 (335 aa).

Glutamate 90, aspartate 112, leucine 114, and aspartate 115 together coordinate Mg(2+). Substrate-binding positions include 115-118 (DGSS), asparagine 210, and lysine 276. Glutamate 282 contributes to the Mg(2+) binding site.

This sequence belongs to the FBPase class 1 family. Homotetramer. Mg(2+) is required as a cofactor.

It localises to the cytoplasm. It carries out the reaction beta-D-fructose 1,6-bisphosphate + H2O = beta-D-fructose 6-phosphate + phosphate. It participates in carbohydrate biosynthesis; gluconeogenesis. This is Fructose-1,6-bisphosphatase class 1 from Ectopseudomonas mendocina (strain ymp) (Pseudomonas mendocina).